We begin with the raw amino-acid sequence, 122 residues long: Interferon alpha-inducible protein 27, mitochondrial (122 aa).

A mitochondrion-targeting transit peptide spans 1 to 33 (MEASALTSSAVTSVAKVVRVASGSAVVLPLARI). The helical transmembrane segment at 34–57 (ATVVIGGVVAMAAVPMVLSAMGFT) threads the bilayer. Residue Lys69 forms a Glycyl lysine isopeptide (Lys-Gly) (interchain with G-Cter in ubiquitin) linkage. 2 helical membrane passes run 71-91 (MSAA…VATL) and 99-119 (LSGL…AVIA). A mediates interaction with SKP2 and hepatitis C virus non-structural protein NS5A region spans residues 76–122 (IANGGGVASGSLVATLQSLGATGLSGLTKFILGSIGSAIAAVIARFY). The required for hepatitis C virus non-structural protein NS5A degradation stretch occupies residues 103-112 (TKFILGSIGS).

It belongs to the IFI6/IFI27 family. Homodimer. Interacts with hepatitis C virus/HCV non-structural protein NS5A; promotes the ubiquitin-mediated proteasomal degradation of NS5A. Interacts with SKP2; promotes the ubiquitin-mediated proteasomal degradation of NS5A. Interacts with NR4A1. May interact with BCL2. In terms of processing, ubiquitinated by TRIM21 via 'Lys-6'-linked ubiquitin chains leading to IFI27 mitochondrial migration.

The protein resides in the mitochondrion membrane. The protein localises to the nucleus inner membrane. It localises to the endoplasmic reticulum membrane. Its function is as follows. Probable adapter protein involved in different biological processes. Part of the signaling pathways that lead to apoptosis. Involved in type-I interferon-induced apoptosis characterized by a rapid and robust release of cytochrome C from the mitochondria and activation of BAX and caspases 2, 3, 6, 8 and 9. Also functions in TNFSF10-induced apoptosis. May also have a function in the nucleus, where it may be involved in the interferon-induced negative regulation of the transcriptional activity of NR4A1, NR4A2 and NR4A3 through the enhancement of XPO1-mediated nuclear export of these nuclear receptors. May thereby play a role in the vascular response to injury. In the innate immune response, has an antiviral activity towards hepatitis C virus/HCV. May prevent the replication of the virus by recruiting both the hepatitis C virus non-structural protein 5A/NS5A and the ubiquitination machinery via SKP2, promoting the ubiquitin-mediated proteasomal degradation of NS5A. Also promotes virus-induced pyroptosis by activating CASP3 in the mitochondria after 'Lys-6'-linked ubiquitination by TRIM21. This chain is Interferon alpha-inducible protein 27, mitochondrial, found in Homo sapiens (Human).